The primary structure comprises 568 residues: Kelch-like protein 12 (568 aa).

Residues 33 to 100 enclose the BTB domain; that stretch reads CDVTLRVEQK…VYTETVHVTV (68 aa). The region spanning 135–236 is the BACK domain; the sequence is CLGIRDFAET…LTPRYITDVI (102 aa). Kelch repeat units lie at residues 282 to 329, 331 to 379, 380 to 426, 427 to 473, 474 to 520, and 522 to 567; these read VLLV…SLHD, IYVI…TLGD, MIYV…VASG, VIYC…LLND, HIYV…VLRG, and LYAI…ALRE.

In terms of assembly, component of the BCR(KLHL12) E3 ubiquitin ligase complex, at least composed of CUL3 and KLHL12 and RBX1. This complex interacts with DVL3 upon activation of the Wnt signaling pathway by WNT3A. Interacts with DRD4, KLHL2 and SEC31A. Interacts with PEF1 and PDCD6/ALG-2; interaction takes place in response to cytosolic calcium increase and leads to bridge together the BCR(KLHL12) complex and SEC31 (SEC31A or SEC31B). Ubiquitinated by the SCF(FBXL17) complex, leading to its degradation by the proteasome: ubiquitination by the SCF(FBXL17) complex takes place when aberrant BTB domain dimers are formed.

It localises to the cytoplasmic vesicle. Its subcellular location is the COPII-coated vesicle. Its pathway is protein modification; protein ubiquitination. Substrate-specific adapter of a BCR (BTB-CUL3-RBX1) E3 ubiquitin ligase complex that acts as a negative regulator of Wnt signaling pathway and ER-Golgi transport. The BCR(KLHL12) complex is involved in ER-Golgi transport by regulating the size of COPII coats, thereby playing a key role in collagen export, which is required for embryonic stem (ES) cells division: BCR(KLHL12) acts by mediating monoubiquitination of SEC31 (SEC31A or SEC31B). The BCR(KLHL12) complex is also involved in neural crest specification: in response to cytosolic calcium increase, interacts with the heterodimer formed with PEF1 and PDCD6/ALG-2, leading to bridge together the BCR(KLHL12) complex and SEC31 (SEC31A or SEC31B), promoting monoubiquitination of SEC31 and subsequent collagen export. As part of the BCR(KLHL12) complex, also acts as a negative regulator of the Wnt signaling pathway by mediating ubiquitination and subsequent proteolysis of DVL3. The BCR(KLHL12) complex also mediates polyubiquitination of DRD4 and PEF1, without leading to degradation of these proteins. This Bos taurus (Bovine) protein is Kelch-like protein 12 (KLHL12).